The chain runs to 491 residues: Interferon regulatory factor 3 (491 aa).

The IRF tryptophan pentad repeat DNA-binding region spans 12–116; sequence KLRFGPWLLN…DPHKVYAVAS (105 aa).

It belongs to the IRF family. As to expression, widely expressed with higher expression in lung, spleen and intestine.

The protein localises to the cytoplasm. It localises to the nucleus. Its function is as follows. Key transcriptional regulator of type I interferon (IFN)-dependent immune responses which plays a critical role in the innate immune response against DNA and RNA viruses. Regulates the transcription of type I IFN genes (IFN-alpha and IFN-beta) and IFN-stimulated genes (ISG) by binding to an interferon-stimulated response element (ISRE) in their promoters. May activate transcription by complex formation with other transcriptional factors, possibly members of the STAT family. Binds specifically to the IFN-stimulated response element (ISRE) but not to the IRF-1 binding site PRD-I. The sequence is that of Interferon regulatory factor 3 (IRF3) from Gallus gallus (Chicken).